Here is a 419-residue protein sequence, read N- to C-terminus: MPLSDFILALKDNPYFGAGFGLVGVGTALALARKGVQLGLVAFRRHYMITLEVPARDRSYAWLLSWLTRHSTRTQHLSVETSYLQHESGRISTKFEFVPSPGNHFIWYRGKWIRVERSREMQMIDLQTGTPWESVTFTALGTDRKVFFNILEEARELALQQEEGKTVMYTAVGSEWRPFGYPRRRRPLNSVVLQQGLADRIVRDVQEFIDNPKWYTDRGIPYRRGYLLYGPPGCGKSSFITALAGELEHSICLLSLTDSSLSDDRLNHLLSVAPQQSLVLLEDVDAAFLSRDLAVENPVKYQGLGRLTFSGLLNALDGVASTEARIVFMTTNHVDRLDPALIRPGRVDLKEYVGYCSHWQLTQMFQRFYPGQAPSLAENFAEHVLRATNQISPAQVQGYFMLYKNDPVGAIHNAESLRR.

At 2–15 (PLSDFILALKDNPY) the chain is on the mitochondrial intermembrane side. A helical transmembrane segment spans residues 16 to 32 (FGAGFGLVGVGTALALA). At 33–419 (RKGVQLGLVA…AIHNAESLRR (387 aa)) the chain is on the mitochondrial matrix side. Y181 bears the Phosphotyrosine mark. 230–237 (GPPGCGKS) contributes to the ATP binding site.

Belongs to the AAA ATPase family. BCS1 subfamily. Interacts with LETM1. Ubiquitous.

It is found in the mitochondrion inner membrane. It carries out the reaction ATP + H2O = ADP + phosphate + H(+). Functionally, chaperone necessary for the incorporation of Rieske iron-sulfur protein UQCRFS1 into the mitochondrial respiratory chain complex III. Plays an important role in the maintenance of mitochondrial tubular networks, respiratory chain assembly and formation of the LETM1 complex. This Homo sapiens (Human) protein is Mitochondrial chaperone BCS1 (BCS1L).